The following is a 75-amino-acid chain: Small ribosomal subunit protein bS16c (75 aa).

Belongs to the bacterial ribosomal protein bS16 family.

The protein resides in the plastid. Its subcellular location is the chloroplast. This Cyanidium caldarium (Red alga) protein is Small ribosomal subunit protein bS16c.